The primary structure comprises 128 residues: 2-iminobutanoate/2-iminopropanoate deaminase (128 aa).

This sequence belongs to the RutC family.

Its subcellular location is the cytoplasm. The enzyme catalyses 2-iminobutanoate + H2O = 2-oxobutanoate + NH4(+). It carries out the reaction 2-iminopropanoate + H2O = pyruvate + NH4(+). Its function is as follows. Catalyzes the hydrolytic deamination of enamine/imine intermediates that form during the course of normal metabolism. May facilitate the release of ammonia from these potentially toxic reactive metabolites, reducing their impact on cellular components. It may act on enamine/imine intermediates formed by several types of pyridoxal-5'-phosphate-dependent dehydratases including L-threonine dehydratase. Preferentially digests Leu and Met in cooperation with L-amino acid oxidase, but digests Phe poorly. This chain is 2-iminobutanoate/2-iminopropanoate deaminase, found in Dermatophagoides farinae (American house dust mite).